Reading from the N-terminus, the 402-residue chain is mRNA-capping enzyme subunit alpha (402 aa).

Catalysis depends on K67, which acts as the N6-GMP-lysine intermediate. A disordered region spans residues 374-402 (SVTKRKLDETSNDDAPAIKKVAKESEKEI).

The protein belongs to the eukaryotic GTase family. Heterodimer. The mRNA-capping enzyme is composed of two separate chains alpha and beta, respectively a mRNA guanylyltransferase and an mRNA 5'-triphosphate monophosphatase.

It is found in the nucleus. It carries out the reaction a 5'-end diphospho-ribonucleoside in mRNA + GTP + H(+) = a 5'-end (5'-triphosphoguanosine)-ribonucleoside in mRNA + diphosphate. In terms of biological role, second step of mRNA capping. Transfer of the GMP moiety of GTP to the 5'-end of RNA via an enzyme-GMP covalent reaction intermediate. This Schizosaccharomyces pombe (strain 972 / ATCC 24843) (Fission yeast) protein is mRNA-capping enzyme subunit alpha (ceg1).